A 418-amino-acid polypeptide reads, in one-letter code: Galactooligosaccharides transport system permease protein GanP (418 aa).

The next 9 helical transmembrane spans lie at 25–45, 65–85, 129–149, 191–211, 226–246, 279–299, 323–343, 357–379, and 388–408; these read IKGIVFLFLGASFFAVFGDLL, VFLLAEGIIAVIVTCFGLAVY, LFILIFAVIFPILFSFALAFT, VVWTLAASTLQVTLGIFLAII, ILILPWAVPGFVTILIFAGLF, LILMQGWLGFPYIFLVSTGVL, YITLPMVFIAMAPIIITQFTF, GGPAVTGSTAGGTDILVSWIYKL, and LAAALTILLSVFVISIALWQF. The 221-residue stretch at 187–407 folds into the ABC transmembrane type-1 domain; sequence LAWTVVWTLA…VFVISIALWQ (221 aa).

The protein belongs to the binding-protein-dependent transport system permease family. The complex is composed of two ATP-binding proteins (MsmX), two transmembrane proteins (GanP and GanQ) and a solute-binding protein (GanS).

It localises to the cell membrane. Functionally, involved in galactan degradation. Part of the ABC transporter complex GanPQS involved in the uptake of galactooligosaccharides. Responsible for the translocation of the substrate across the membrane. This chain is Galactooligosaccharides transport system permease protein GanP (ganP), found in Bacillus subtilis (strain 168).